The primary structure comprises 185 residues: Dual-action ribosomal maturation protein DarP (185 aa).

The segment at 1-22 is disordered; the sequence is MWKNGAMRGCNKETGEFLGPSR.

Belongs to the DarP family.

The protein localises to the cytoplasm. In terms of biological role, member of a network of 50S ribosomal subunit biogenesis factors which assembles along the 30S-50S interface, preventing incorrect 23S rRNA structures from forming. Promotes peptidyl transferase center (PTC) maturation. The protein is Dual-action ribosomal maturation protein DarP of Xylella fastidiosa (strain 9a5c).